Reading from the N-terminus, the 199-residue chain is Recombination protein RecR (199 aa).

The C4-type zinc-finger motif lies at 57–72 (CPICGNITEKEVCDIC). Residues 80 to 176 (TTIMVVEQPK…KVTRLAAGLS (97 aa)) enclose the Toprim domain.

Belongs to the RecR family.

Functionally, may play a role in DNA repair. It seems to be involved in an RecBC-independent recombinational process of DNA repair. It may act with RecF and RecO. The polypeptide is Recombination protein RecR (Lactobacillus helveticus (strain DPC 4571)).